Reading from the N-terminus, the 389-residue chain is uncharacterized protein (389 aa).

The protein belongs to the mimivirus L17x/L18x family.

This is an uncharacterized protein from Acanthamoeba polyphaga mimivirus (APMV).